We begin with the raw amino-acid sequence, 544 residues long: Chaperonin GroEL 1 (544 aa).

Residues 30-33 (TLGP), lysine 51, 87-91 (DGTTT), glycine 415, 481-483 (DAL), and aspartate 497 each bind ATP.

Belongs to the chaperonin (HSP60) family. As to quaternary structure, forms a cylinder of 14 subunits composed of two heptameric rings stacked back-to-back. Interacts with the co-chaperonin GroES.

It is found in the cytoplasm. The catalysed reaction is ATP + H2O + a folded polypeptide = ADP + phosphate + an unfolded polypeptide.. Its function is as follows. Together with its co-chaperonin GroES, plays an essential role in assisting protein folding. The GroEL-GroES system forms a nano-cage that allows encapsulation of the non-native substrate proteins and provides a physical environment optimized to promote and accelerate protein folding. In Chlamydia pneumoniae (Chlamydophila pneumoniae), this protein is Chaperonin GroEL 1.